A 340-amino-acid chain; its full sequence is Centromere protein N (340 aa).

Phosphoserine is present on residues S227 and S236.

This sequence belongs to the CENP-N/CHL4 family. In terms of assembly, component of the CENPA-NAC complex, at least composed of CENPA, CENPC, CENPH, CENPM, CENPN, CENPT and CENPU. The CENPA-NAC complex interacts with the CENPA-CAD complex, composed of CENPI, CENPK, CENPL, CENPO, CENPP, CENPQ, CENPR and CENPS. Interacts directly with CENPA. Identified in a centromere complex containing histones H2A, H2B and H4, and at least CENPA, CENPB, CENPC, CENPT, CENPN, HJURP, SUPT16H, SSRP1 and RSF1.

It is found in the nucleus. It localises to the chromosome. The protein localises to the centromere. Its subcellular location is the kinetochore. Component of the CENPA-NAC (nucleosome-associated) complex, a complex that plays a central role in assembly of kinetochore proteins, mitotic progression and chromosome segregation. The CENPA-NAC complex recruits the CENPA-CAD (nucleosome distal) complex and may be involved in incorporation of newly synthesized CENPA into centromeres. CENPN is the first protein to bind specifically to CENPA nucleosomes and the direct binding of CENPA nucleosomes by CENPN is required for centromere assembly. Required for chromosome congression and efficiently align the chromosomes on a metaphase plate. In Rattus norvegicus (Rat), this protein is Centromere protein N (Cenpn).